The chain runs to 451 residues: Lipase member H (451 aa).

An N-terminal signal peptide occupies residues 1-16; sequence MLRLCFFISFMCLVKS. The N-linked (GlcNAc...) asparagine glycan is linked to N66. The active-site Nucleophile is S154. Catalysis depends on D178, which acts as the Charge relay system. A disulfide bridge links C233 with C246. Residue H248 is the Charge relay system of the active site. Cystine bridges form between C270-C281, C284-C292, and C427-C446.

This sequence belongs to the AB hydrolase superfamily. Lipase family. As to quaternary structure, interacts with TTMP/C3orf52. Expressed in placenta and colon. Weakly expressed in small intestine.

It localises to the secreted. Its subcellular location is the cell membrane. It carries out the reaction 1-hexadecanoyl-2-(9Z-octadecenoyl)-sn-glycero-3-phosphate + H2O = 2-(9Z-octadecenoyl)-sn-glycero-3-phosphate + hexadecanoate + H(+). Functionally, hydrolyzes specifically phosphatidic acid (PA) to produce 2-acyl lysophosphatidic acid (LPA; a potent bioactive lipid mediator) and fatty acid. Does not hydrolyze other phospholipids, like phosphatidylserine (PS), phosphatidylcholine (PC) and phosphatidylethanolamine (PE) or triacylglycerol (TG). The chain is Lipase member H (Liph) from Mus musculus (Mouse).